The chain runs to 1032 residues: Y' element ATP-dependent helicase YPR204W (1032 aa).

One can recognise a Helicase ATP-binding domain in the interval 1 to 175 (MADTPSVAVQ…LQRIGLTGLA (175 aa)). ATP is bound at residue 11–18 (APPGYGKT). The DEAH box motif lies at 121 to 124 (DEFH). The region spanning 232–381 (KLLLALFEIE…EFYGLESKKG (150 aa)) is the Helicase C-terminal domain. Positions 455-634 (ANASTNATTN…ATTTESTNAS (180 aa)) are enriched in low complexity. The disordered stretch occupies residues 455-658 (ANASTNATTN…RFHPVTDINK (204 aa)). Residues 635–658 (AKEDANKDGNAEDNRFHPVTDINK) show a composition bias toward basic and acidic residues.

The protein belongs to the helicase family. Yeast subtelomeric Y' repeat subfamily.

In terms of biological role, catalyzes DNA unwinding and is involved in telomerase-independent telomere maintenance. This is Y' element ATP-dependent helicase YPR204W from Saccharomyces cerevisiae (strain ATCC 204508 / S288c) (Baker's yeast).